Here is a 424-residue protein sequence, read N- to C-terminus: Histidine--tRNA ligase (424 aa).

The protein belongs to the class-II aminoacyl-tRNA synthetase family. In terms of assembly, homodimer.

The protein localises to the cytoplasm. It carries out the reaction tRNA(His) + L-histidine + ATP = L-histidyl-tRNA(His) + AMP + diphosphate + H(+). This is Histidine--tRNA ligase from Shewanella frigidimarina (strain NCIMB 400).